Consider the following 957-residue polypeptide: MNSVEAVEKILNYSFVNKTLLKEAITQKSPLFDRLEFFGDSILEVAFTNYICHTYPNLKVKELRDLRTANVSNEKFARIAVNHNLHHFLLLQNPSLFKKVKNFAEAVRKEDDPVPYGGLVKAPKILADTLESIAATVFIDVNYDVKRLWEIFRSLLEPIYTPDDLLLQPKLPFLTLFRLADKHGSESTSGIRKMTTSTKILLRNKDCLDVDLEDVKGKSFEICSTELFSLSTVSENSLTDEMSQEEVVIDEDSPNVEPEDVKGKLFEICYTRKLQIQTGSSGNPLTYEMTTKQMVVDKDSLHVEPVNGRGELIEICTKNKWPRPIFSVQEEKGPKNEPKFVCSVKIEIPNIEGTFHMKGDIKSKKKQAENSLAYHMIRALESSLVSLVISNLQKPKSLDEKNNPLLFSSEMDSSVEAVEKILNYSFVNKTLLKELLTHNNSPLFQGLMFVGESALSLAFTKHLYLTYPMLEPKDLSVLRDANTCHDKYACVAVKKGIYQSFIGSVPKPEKMTTDFIELMGKEDDPYRVVKAPKILVNLLAGVAGAVYIDVKYNVQRLLEIFRVLLEPIYTLDDLRMQLKQPFLMLFRLADKHGKQIDFRYSKDGGSRKNIAQVYMDDMFIASGCAKRIDTAKLLAAEEAIQKLSECMPIEKIIHQDNLDGEVIQTGSSSLLTAFENPLTEEMTQEQMVIDEDSLDVEWKLFETEELQIQTGSSSMSTVSENPLPCEITPTKMVIGEVSPHVELEDVKGKSFEISSTETSSLPIAFENPLTNELTQEQMVIDENSPYVEPVDTKGKLFESCSVESSSLPTTSENPSTYEMTTKQMVVDKDSPHVEPEDEKGKLFEICAKNKWPNPIFSVEEERGQQNEQKIVCSVKIEIPNIEGTFHIKGDAKPTKKEAENSSADHMIRALESSVMSLVITNLQMHENLDGKKKNLQMKESLNENKTLLHSTKRRRRL.

The RNase III 1 domain occupies 4–142 (VEAVEKILNY…IAATVFIDVN (139 aa)). A DRBM 1 domain is found at 307–382 (NGRGELIEIC…AYHMIRALES (76 aa)). The 137-residue stretch at 415 to 551 (VEAVEKILNY…VAGAVYIDVK (137 aa)) folds into the RNase III 2 domain. 2 consecutive DRBM domains span residues 566–645 (EPIY…KLSE) and 837–912 (DEKG…ALES).

Ribonuclease that cleaves double-stranded RNA (dsRNA). The polypeptide is Ribonuclease 3-like protein 3 (RTL3) (Arabidopsis thaliana (Mouse-ear cress)).